Here is a 466-residue protein sequence, read N- to C-terminus: tRNA-2-methylthio-N(6)-dimethylallyladenosine synthase (466 aa).

The 121-residue stretch at 5–125 (RKLHIKSYGC…LPELLARAGR (121 aa)) folds into the MTTase N-terminal domain. Positions 14, 50, 88, 166, 170, and 173 each coordinate [4Fe-4S] cluster. Residues 152–384 (RARGVSAFVT…QSLIDSQQAA (233 aa)) form the Radical SAM core domain. Residues 387–449 (KAAIGTVVDV…RYSLLGELVA (63 aa)) enclose the TRAM domain.

Belongs to the methylthiotransferase family. MiaB subfamily. Monomer. Requires [4Fe-4S] cluster as cofactor.

The protein resides in the cytoplasm. The catalysed reaction is N(6)-dimethylallyladenosine(37) in tRNA + (sulfur carrier)-SH + AH2 + 2 S-adenosyl-L-methionine = 2-methylsulfanyl-N(6)-dimethylallyladenosine(37) in tRNA + (sulfur carrier)-H + 5'-deoxyadenosine + L-methionine + A + S-adenosyl-L-homocysteine + 2 H(+). Functionally, catalyzes the methylthiolation of N6-(dimethylallyl)adenosine (i(6)A), leading to the formation of 2-methylthio-N6-(dimethylallyl)adenosine (ms(2)i(6)A) at position 37 in tRNAs that read codons beginning with uridine. This chain is tRNA-2-methylthio-N(6)-dimethylallyladenosine synthase, found in Bradyrhizobium sp. (strain BTAi1 / ATCC BAA-1182).